The primary structure comprises 312 residues: Ribonuclease Z (312 aa).

Zn(2+)-binding residues include His-62, His-64, Asp-66, His-67, His-144, Asp-215, and His-273. Asp-66 acts as the Proton acceptor in catalysis.

It belongs to the RNase Z family. As to quaternary structure, homodimer. Zn(2+) serves as cofactor.

The catalysed reaction is Endonucleolytic cleavage of RNA, removing extra 3' nucleotides from tRNA precursor, generating 3' termini of tRNAs. A 3'-hydroxy group is left at the tRNA terminus and a 5'-phosphoryl group is left at the trailer molecule.. In terms of biological role, zinc phosphodiesterase, which displays some tRNA 3'-processing endonuclease activity. Probably involved in tRNA maturation, by removing a 3'-trailer from precursor tRNA. The chain is Ribonuclease Z from Prochlorococcus marinus (strain MIT 9301).